Here is a 201-residue protein sequence, read N- to C-terminus: Large ribosomal subunit protein bL25 (201 aa).

This sequence belongs to the bacterial ribosomal protein bL25 family. CTC subfamily. Part of the 50S ribosomal subunit; part of the 5S rRNA/L5/L18/L25 subcomplex. Contacts the 5S rRNA. Binds to the 5S rRNA independently of L5 and L18.

In terms of biological role, this is one of the proteins that binds to the 5S RNA in the ribosome where it forms part of the central protuberance. This is Large ribosomal subunit protein bL25 from Ectopseudomonas mendocina (strain ymp) (Pseudomonas mendocina).